A 257-amino-acid polypeptide reads, in one-letter code: NAD-capped RNA hydrolase NudC (257 aa).

Substrate-binding residues include K25 and R69. C98 and C101 together coordinate Zn(2+). Residue E111 coordinates substrate. Zn(2+) is bound by residues C116 and C119. Y124 is a binding site for substrate. The 124-residue stretch at 125-248 (PQIAPCIIVA…TVARRLIEDT (124 aa)) folds into the Nudix hydrolase domain. A divalent metal cation-binding residues include A158, E174, and E178. The short motif at 159–180 (GFVEVGETLEQAVAREVMEESG) is the Nudix box element. 192-199 (QPWPFPQS) contacts substrate. Position 219 (E219) interacts with a divalent metal cation. Position 241 (A241) interacts with substrate.

It belongs to the Nudix hydrolase family. NudC subfamily. As to quaternary structure, homodimer. Mg(2+) serves as cofactor. The cofactor is Mn(2+). Zn(2+) is required as a cofactor.

It carries out the reaction a 5'-end NAD(+)-phospho-ribonucleoside in mRNA + H2O = a 5'-end phospho-adenosine-phospho-ribonucleoside in mRNA + beta-nicotinamide D-ribonucleotide + 2 H(+). It catalyses the reaction NAD(+) + H2O = beta-nicotinamide D-ribonucleotide + AMP + 2 H(+). The catalysed reaction is NADH + H2O = reduced beta-nicotinamide D-ribonucleotide + AMP + 2 H(+). MRNA decapping enzyme that specifically removes the nicotinamide adenine dinucleotide (NAD) cap from a subset of mRNAs by hydrolyzing the diphosphate linkage to produce nicotinamide mononucleotide (NMN) and 5' monophosphate mRNA. The NAD-cap is present at the 5'-end of some mRNAs and stabilizes RNA against 5'-processing. Has preference for mRNAs with a 5'-end purine. Catalyzes the hydrolysis of a broad range of dinucleotide pyrophosphates. The protein is NAD-capped RNA hydrolase NudC of Escherichia coli O157:H7.